The primary structure comprises 435 residues: MEEELKNLIKVSVSVIISISYCYYVPTRIKPGIFRFLSVLPICALFRVLPLFFASVHLSGYTALFISWLANFKLILFSFNQGPLFPLPSNLTRFICFACFPIKLQQNPKRRDYFFQWEYPIEVLFSNQFVTKVVILSVVLHMYNHIQHIYPIVLFVLYPLHLYLVLEILLKLFNAFFSIALDCELEPQLNEPYLAYSLRDFWGHWWTLMLPTILLPDVYARMRRITEGKMNSENALYLGVFVTFLVSGALHEFLFFYITRERPTGEVTLFFVLHGVCIVAYDARLKKKIARWIGFEFCPCLILQVMVMGFVVVTAGWLFFPPLVRTGKIQRFANEALLFIGFVRNLFNESLFFMRKFFNEALFFTGFVMRKLFNGALFFIGFVKLKLFNESSLFFIMRKLFNEAMFFIGFVIRKLFNEAMFFIGFVKLKLFTFGW.

Transmembrane regions (helical) follow at residues 7–27 (NLIK…YVPT), 36–56 (FLSV…FASV), 59–79 (SGYT…LFSF), 120–140 (PIEV…SVVL), 149–169 (IYPI…LEIL), 200–220 (DFWG…DVYA), 238–258 (LGVF…FFYI), 263–283 (PTGE…AYDA), 300–320 (CLIL…WLFF), 363–383 (FFTG…IGFV), and 406–426 (FFIG…IGFV).

Belongs to the wax synthase family.

It is found in the membrane. It catalyses the reaction a long chain fatty alcohol + a fatty acyl-CoA = a wax ester + CoA. Functionally, catalyzes the final step in the synthesis of long-chain linear esters (waxes). In Arabidopsis thaliana (Mouse-ear cress), this protein is Probable long-chain-alcohol O-fatty-acyltransferase 11.